Reading from the N-terminus, the 400-residue chain is Probable peptidoglycan glycosyltransferase FtsW (400 aa).

11 helical membrane-spanning segments follow: residues 30–50 (LSVLALLGLGLVMVASASIGI), 65–84 (QAAYVVLGLAAASLAYRIRL), 92–112 (GLLLGFAYFLLILVLVPGVGV), 123–143 (LGLFNLQVSEVAKLLFTLYLA), 157–177 (FAGFLRPMLLLSGAALLLLME), 179–199 (DFGAAVVLMAIGLALLFLAGA), 201–221 (LWQFALLVGTVAAALAMLAIT), 247–267 (TQSLIAIGSGSWFGVGLGASV), 280–300 (FLFAVLAEELGLVGITVVVLL), 321–341 (LFGAYLAYGVGVWVSLQAFIN), and 356–376 (LPLMSYGGSSMLMTCAAVGLL).

This sequence belongs to the SEDS family. FtsW subfamily.

The protein resides in the cell inner membrane. It catalyses the reaction [GlcNAc-(1-&gt;4)-Mur2Ac(oyl-L-Ala-gamma-D-Glu-L-Lys-D-Ala-D-Ala)](n)-di-trans,octa-cis-undecaprenyl diphosphate + beta-D-GlcNAc-(1-&gt;4)-Mur2Ac(oyl-L-Ala-gamma-D-Glu-L-Lys-D-Ala-D-Ala)-di-trans,octa-cis-undecaprenyl diphosphate = [GlcNAc-(1-&gt;4)-Mur2Ac(oyl-L-Ala-gamma-D-Glu-L-Lys-D-Ala-D-Ala)](n+1)-di-trans,octa-cis-undecaprenyl diphosphate + di-trans,octa-cis-undecaprenyl diphosphate + H(+). The protein operates within cell wall biogenesis; peptidoglycan biosynthesis. In terms of biological role, peptidoglycan polymerase that is essential for cell division. The chain is Probable peptidoglycan glycosyltransferase FtsW from Thioalkalivibrio sulfidiphilus (strain HL-EbGR7).